Reading from the N-terminus, the 536-residue chain is Arylsulfatase K (536 aa).

Residues methionine 1–alanine 24 form the signal peptide. Residues aspartate 42 and cysteine 82 each coordinate Ca(2+). Cysteine 82 acts as the Nucleophile in catalysis. Cysteine 82 carries the post-translational modification 3-oxoalanine (Cys). Lysine 130 lines the substrate pocket. Asparagine 195 is a glycosylation site (N-linked (GlcNAc...) asparagine). Histidine 253 serves as a coordination point for substrate. The N-linked (GlcNAc...) asparagine glycan is linked to asparagine 264. Aspartate 315 and histidine 316 together coordinate Ca(2+). N-linked (GlcNAc...) asparagine glycans are attached at residues asparagine 377, asparagine 416, and asparagine 501.

This sequence belongs to the sulfatase family. The cofactor is Ca(2+). In terms of processing, the conversion to 3-oxoalanine (also known as C-formylglycine, FGly), of a serine or cysteine residue in prokaryotes and of a cysteine residue in eukaryotes, is critical for catalytic activity.

The protein resides in the secreted. The protein localises to the lysosome. It catalyses the reaction an aryl sulfate + H2O = a phenol + sulfate + H(+). It carries out the reaction Hydrolysis of the 2-sulfate groups of the 2-O-sulfo-D-glucuronate residues of chondroitin sulfate, heparin and heparitin sulfate.. Its function is as follows. Catalyzes the hydrolysis of pseudosubstrates such as p-nitrocatechol sulfate and p-nitrophenyl sulfate. Catalyzes the hydrolysis of the 2-sulfate groups of the 2-O-sulfo-D-glucuronate residues of chondroitin sulfate, heparin and heparitin sulfate. Acts selectively on 2-sulfoglucuronate and lacks activity against 2-sulfoiduronate. In Xenopus laevis (African clawed frog), this protein is Arylsulfatase K (arsk).